Here is a 378-residue protein sequence, read N- to C-terminus: Formate dehydrogenase 2, mitochondrial (378 aa).

The transit peptide at 1 to 18 (MAMWRAPSAAGQLLGRAL) directs the protein to the mitochondrion. The substrate site is built by Val122 and Asn146. NAD(+)-binding positions include Thr147, 201–202 (RI), Asp221, 256–260 (PLTEK), Asn282, Asp308, and 332–335 (HCSG).

Belongs to the D-isomer specific 2-hydroxyacid dehydrogenase family. FDH subfamily. As to quaternary structure, homodimer.

It is found in the mitochondrion. It carries out the reaction formate + NAD(+) = CO2 + NADH. Its function is as follows. Catalyzes the NAD(+)-dependent oxidation of formate to carbon dioxide. Involved in the cell stress response. The polypeptide is Formate dehydrogenase 2, mitochondrial (Oryza sativa subsp. japonica (Rice)).